The following is a 418-amino-acid chain: Methylmalonic aciduria type A protein, mitochondrial (418 aa).

The N-terminal 65 residues, 1-65 (MPMLLPHPHQ…LLSDGLKRKL (65 aa)), are a transit peptide targeting the mitochondrion. GTP is bound by residues 150–158 (GPPGAGKST), aspartate 292, and 328–330 (SAR).

This sequence belongs to the SIMIBI class G3E GTPase family. ArgK/MeaB subfamily. Homodimer. Interacts with MMUT (the apoenzyme form); the interaction is GTP dependent. In terms of tissue distribution, widely expressed. Highest expression is observed in liver and skeletal muscle.

It is found in the mitochondrion. It localises to the cytoplasm. The enzyme catalyses GTP + H2O = GDP + phosphate + H(+). GTPase activity is stimulated by MMUT. In terms of biological role, GTPase, binds and hydrolyzes GTP. Involved in intracellular vitamin B12 metabolism, mediates the transport of cobalamin (Cbl) into mitochondria for the final steps of adenosylcobalamin (AdoCbl) synthesis. Functions as a G-protein chaperone that assists AdoCbl cofactor delivery from MMAB to the methylmalonyl-CoA mutase (MMUT). Plays a dual role as both a protectase and a reactivase for MMUT. Protects MMUT from progressive inactivation by oxidation by decreasing the rate of the formation of the oxidized inactive cofactor hydroxocobalamin (OH2Cbl). Additionally acts a reactivase by promoting the replacement of OH2Cbl by the active cofactor AdoCbl, restoring the activity of MMUT in the presence and hydrolysis of GTP. The polypeptide is Methylmalonic aciduria type A protein, mitochondrial (Homo sapiens (Human)).